Reading from the N-terminus, the 327-residue chain is GMP reductase (327 aa).

Cysteine 176 serves as the catalytic Thioimidate intermediate. An NADP(+)-binding site is contributed by 205–228 (IIADGGIRTHGDIAKSIRFGATMV).

This sequence belongs to the IMPDH/GMPR family. GuaC type 2 subfamily.

It catalyses the reaction IMP + NH4(+) + NADP(+) = GMP + NADPH + 2 H(+). Functionally, catalyzes the irreversible NADPH-dependent deamination of GMP to IMP. It functions in the conversion of nucleobase, nucleoside and nucleotide derivatives of G to A nucleotides, and in maintaining the intracellular balance of A and G nucleotides. The polypeptide is GMP reductase (Streptococcus equi subsp. zooepidemicus (strain H70)).